Consider the following 501-residue polypeptide: Sensor histidine kinase PdtaS (501 aa).

The tract at residues 4-150 is GAF; the sequence is LGDLLAEHTV…HLETAYRLCA (147 aa). A PAS-like region spans residues 179 to 291; the sequence is DGFIRLDVDG…TEVKRRDRAL (113 aa). Positions 300–495 constitute a Histidine kinase domain; that stretch reads EIHHRVKNNL…DVVLRVPVGR (196 aa). Residue H303 is modified to Phosphohistidine; by autocatalysis.

In terms of processing, autophosphorylated.

The protein localises to the cytoplasm. It catalyses the reaction ATP + protein L-histidine = ADP + protein N-phospho-L-histidine.. In terms of biological role, member of the two-component regulatory system PdtaR/PdtaS. This two-component system plays an essential role in mycobacterial adaptation to poor nutrient conditions. Nutrient deprivation results in increasing intracellular concentrations of cyclic diguanosine monophosphate (c-di-GMP), which binds to the PdtaS sensor and promotes its autophosphorylation, leading to the activation of the signaling cascade. The phosphate group is then transferred to PdtaR. In addition, the PdtaR/PdtaS two-component system controls copper and nitric oxide (NO) resistance downstream of the intramembrane protease Rip1. This coupled Rip1/PdtaS/PdtaR circuit controls NO resistance and acute lung infection in mice by relieving PdtaR/PdtaS-mediated repression of isonitrile chalkophore biosynthesis. Two signals are required to fully inactivate the PdtaR/PdtaS system and mediate NO resistance: a cytoplasmic inhibitory signal through the PdtaS kinase mediated by direct sensing of NO and the production of PPE1-5', an NO-induced small RNA, to sequester PdtaR. The sequence is that of Sensor histidine kinase PdtaS (pdtaS) from Mycobacterium tuberculosis (strain CDC 1551 / Oshkosh).